We begin with the raw amino-acid sequence, 404 residues long: Tryptophan synthase beta chain (404 aa).

N6-(pyridoxal phosphate)lysine is present on Lys94.

Belongs to the TrpB family. In terms of assembly, tetramer of two alpha and two beta chains. Requires pyridoxal 5'-phosphate as cofactor.

The enzyme catalyses (1S,2R)-1-C-(indol-3-yl)glycerol 3-phosphate + L-serine = D-glyceraldehyde 3-phosphate + L-tryptophan + H2O. It participates in amino-acid biosynthesis; L-tryptophan biosynthesis; L-tryptophan from chorismate: step 5/5. In terms of biological role, the beta subunit is responsible for the synthesis of L-tryptophan from indole and L-serine. In Staphylococcus aureus (strain JH1), this protein is Tryptophan synthase beta chain.